The primary structure comprises 177 residues: Large ribosomal subunit protein uL6 (177 aa).

The protein belongs to the universal ribosomal protein uL6 family. Part of the 50S ribosomal subunit.

In terms of biological role, this protein binds to the 23S rRNA, and is important in its secondary structure. It is located near the subunit interface in the base of the L7/L12 stalk, and near the tRNA binding site of the peptidyltransferase center. The chain is Large ribosomal subunit protein uL6 from Sphingopyxis alaskensis (strain DSM 13593 / LMG 18877 / RB2256) (Sphingomonas alaskensis).